We begin with the raw amino-acid sequence, 333 residues long: Terpene synthase 2 (333 aa).

Residues aspartate 82–threonine 87 carry the DDxx(x)D/E motif motif. The short motif at asparagine 219 to glutamate 227 is the NDxxSxxxD/E motif element.

This sequence belongs to the terpene synthase family.

The catalysed reaction is (2E,6E)-farnesyl diphosphate = (E)-beta-farnesene + diphosphate. It carries out the reaction (2E,6E)-farnesyl diphosphate = (1S,2S,4R)-beta-elemene + diphosphate. In terms of biological role, terpene synthase that converts its substrate farnesyl diphosphate (FPP) into the sesquiterpene (E)-beta-farnesene as major product. Is also able to convert FPP into delta-elemene, beta-elemene, (E)-beta-caryophyllene, 9-epi-(E)-caryophyllene, and a yet unidentified sesquiterpene. This chain is Terpene synthase 2, found in Dictyostelium purpureum (Slime mold).